Here is a 702-residue protein sequence, read N- to C-terminus: 1,4-alpha-glucan-branching enzyme (702 aa).

Ala-2 carries the post-translational modification N-acetylalanine. Residues 62–63 and 91–93 each bind substrate; these read NE and WAP. Trp-107 is a (1,4-alpha-D-glucosyl)n binding site. 118–121 provides a ligand contact to substrate; the sequence is DYGK. A (1,4-alpha-D-glucosyl)n-binding site is contributed by Lys-143. Tyr-173 is modified (phosphotyrosine). 333 to 336 is a substrate binding site; the sequence is EILR. Asp-357 serves as the catalytic Nucleophile. The Proton donor role is filled by Glu-412.

It belongs to the glycosyl hydrolase 13 family. GlgB subfamily. Monomer.

It carries out the reaction Transfers a segment of a (1-&gt;4)-alpha-D-glucan chain to a primary hydroxy group in a similar glucan chain.. The protein operates within glycan biosynthesis; glycogen biosynthesis. In terms of biological role, glycogen-branching enzyme participates in the glycogen biosynthetic process along with glycogenin and glycogen synthase. Generates alpha-1,6-glucosidic branches from alpha-1,4-linked glucose chains, to increase solubility of the glycogen polymer. This chain is 1,4-alpha-glucan-branching enzyme (GBE1), found in Homo sapiens (Human).